The sequence spans 707 residues: Vicilin-like seed storage protein At2g18540 (707 aa).

The N-terminal stretch at 1-24 (MSRFRILPLSIFLCFVSLFFCTES) is a signal peptide. A Cupin type-1 1 domain is found at 42-185 (PLLVKKDQRT…AFAVPEDILR (144 aa)). Residues asparagine 60, asparagine 203, asparagine 285, asparagine 356, asparagine 396, and asparagine 399 are each glycosylated (N-linked (GlcNAc...) asparagine). A Cupin type-1 2 domain is found at 247–403 (FNVFEEDPDF…SFNLSNETIK (157 aa)). Basic and acidic residues predominate over residues 439 to 696 (EEEEIERRRK…KKEEEEEKRR (258 aa)). The interval 439–707 (EEEEIERRRK…PPQPKPPEEI (269 aa)) is disordered. Pro residues predominate over residues 698-707 (PPQPKPPEEI).

This sequence belongs to the 7S seed storage protein family.

Seed storage protein. The protein is Vicilin-like seed storage protein At2g18540 of Arabidopsis thaliana (Mouse-ear cress).